Consider the following 87-residue polypeptide: Small ribosomal subunit protein uS17 (87 aa).

This sequence belongs to the universal ribosomal protein uS17 family. In terms of assembly, part of the 30S ribosomal subunit.

Functionally, one of the primary rRNA binding proteins, it binds specifically to the 5'-end of 16S ribosomal RNA. The protein is Small ribosomal subunit protein uS17 of Geobacillus kaustophilus (strain HTA426).